The primary structure comprises 197 residues: Carbohydrate-binding domain-containing protein C2E1P3.05c (197 aa).

A signal peptide spans 1–23 (MLTQSLFLTVLTLALSLVSKTSA). CBM1 domains are found at residues 25–61 (QCSP…SQCI) and 68–104 (PCAK…SQCI). 4 disulfides stabilise this stretch: C33-C50, C44-C60, C76-C93, and C87-C103. The segment at 115 to 163 (SSAASSTTSTTSSSSLVSSTTLTSSSPSAVSSTTSIPSISSTISSSVST) is disordered. 2 N-linked (GlcNAc...) asparagine glycosylation sites follow: N182 and N193.

The protein localises to the secreted. In Schizosaccharomyces pombe (strain 972 / ATCC 24843) (Fission yeast), this protein is Carbohydrate-binding domain-containing protein C2E1P3.05c.